The chain runs to 537 residues: CTP synthase (537 aa).

The interval 1–265 is amidoligase domain; it reads MTKFIFVTGG…GKYLVKRLGL (265 aa). Ser-13 lines the CTP pocket. Ser-13 is a UTP binding site. 14 to 19 provides a ligand contact to ATP; sequence GLGKGI. L-glutamine is bound at residue Tyr-54. Asp-71 is an ATP binding site. Residues Asp-71 and Glu-139 each contribute to the Mg(2+) site. Residues 146-148, 186-191, and Lys-222 contribute to the CTP site; these read DIE and KTKPTQ. UTP-binding positions include 186 to 191 and Lys-222; that span reads KTKPTQ. In terms of domain architecture, Glutamine amidotransferase type-1 spans 290–532; the sequence is EIAIVGKYVK…VKAAKEYKQE (243 aa). Gly-351 contributes to the L-glutamine binding site. Cys-378 acts as the Nucleophile; for glutamine hydrolysis in catalysis. L-glutamine-binding positions include 379–382, Glu-402, and Arg-459; that span reads FGFQ. Catalysis depends on residues His-505 and Glu-507.

It belongs to the CTP synthase family. As to quaternary structure, homotetramer.

The enzyme catalyses UTP + L-glutamine + ATP + H2O = CTP + L-glutamate + ADP + phosphate + 2 H(+). The catalysed reaction is L-glutamine + H2O = L-glutamate + NH4(+). It catalyses the reaction UTP + NH4(+) + ATP = CTP + ADP + phosphate + 2 H(+). Its pathway is pyrimidine metabolism; CTP biosynthesis via de novo pathway; CTP from UDP: step 2/2. Allosterically activated by GTP, when glutamine is the substrate; GTP has no effect on the reaction when ammonia is the substrate. The allosteric effector GTP functions by stabilizing the protein conformation that binds the tetrahedral intermediate(s) formed during glutamine hydrolysis. Inhibited by the product CTP, via allosteric rather than competitive inhibition. Catalyzes the ATP-dependent amination of UTP to CTP with either L-glutamine or ammonia as the source of nitrogen. Regulates intracellular CTP levels through interactions with the four ribonucleotide triphosphates. The protein is CTP synthase of Pyrococcus abyssi (strain GE5 / Orsay).